Here is a 1321-residue protein sequence, read N- to C-terminus: Insulin receptor substrate 2 (1321 aa).

The segment covering 1 to 10 (MASAPLPGPP) has biased composition (pro residues). Disordered stretches follow at residues 1 to 32 (MASA…HSVR) and 51 to 73 (RGPG…PPRL). A PH domain is found at 16 to 144 (DGPNLNNNNN…WYRALTDLVS (129 aa)). Low complexity predominate over residues 18–28 (PNLNNNNNNNN). Residues 191–295 (YREVWQVNLK…EAMKALKELF (105 aa)) enclose the IRS-type PTB domain. Positions 299–536 (PRSKSQSSGS…ARDGSGGELY (238 aa)) are disordered. Phosphoserine is present on residues S303 and S343. T347 is subject to Phosphothreonine. Position 362 is a phosphoserine (S362). A compositionally biased stretch (gly residues) spans 364 to 376 (GDGGAAGGAGTAG). S381, S385, and S388 each carry phosphoserine. R409 is modified (omega-N-methylarginine). Low complexity-rich tracts occupy residues 435–456 (SPPA…SGSY) and 478–490 (PSSG…GSPS). Residue T517 is modified to Phosphothreonine. Phosphoserine is present on S520. Phosphothreonine is present on T524. The residue at position 536 (Y536) is a Phosphotyrosine; by INSR. Residues 536 to 539 (YGYM) carry the YXXM motif 1 motif. A Phosphoserine; by PLK1 modification is found at S556. S573 is subject to Phosphoserine. A phosphothreonine mark is found at T575 and T576. At S590 the chain carries Phosphoserine. The YXXM motif 2 signature appears at 594-597 (YTLM). Phosphoserine is present on residues S604 and S616. Y649 bears the Phosphotyrosine mark. 2 consecutive short sequence motifs (YXXM motif) follow at residues 649-652 (YMPM) and 671-674 (YMPM). At Y671 the chain carries Phosphotyrosine; by INSR. 4 positions are modified to phosphoserine: S675, S678, S727, and S728. A YXXM motif 5 motif is present at residues 734–737 (YMRM). Phosphoserine is present on S762. T771 is modified (phosphothreonine). At S796 the chain carries Phosphoserine. The YXXM motif 6 motif lies at 814–817 (YVLM). Phosphoserine is present on S819. Disordered stretches follow at residues 834-871 (ATPG…RPEG) and 888-1091 (EGLQ…ASPT). A Phosphoserine modification is found at S907. Y911 is modified (phosphotyrosine; by INSR). The segment covering 930–959 (LLASAASSSSLLSASSPASSLGSGTPGTSS) has biased composition (low complexity). S965 carries the phosphoserine modification. At Y970 the chain carries Phosphotyrosine; by INSR. Residues 1005–1014 (PYPPLPPRPS) are compositionally biased toward pro residues. The segment covering 1039–1055 (AATSQGPTAGSSMSSEP) has biased composition (polar residues). A YXXM motif 7 motif is present at residues 1061-1064 (YTEM). The residue at position 1071 (T1071) is a Phosphothreonine. A compositionally biased stretch (pro residues) spans 1072-1082 (PPQPIVAPPKP). Phosphoserine is present on S1089. S1098 is modified (phosphoserine; by PLK1). A disordered region spans residues 1110–1198 (LQVSQPPDPH…TSPGQAQPLV (89 aa)). A compositionally biased stretch (low complexity) spans 1139–1154 (ETFSSTTTVTPVSPSF). T1148 carries the phosphothreonine modification. S1151, S1163, S1165, S1175, and S1190 each carry phosphoserine. A compositionally biased stretch (polar residues) spans 1163–1179 (SASVENVSLRKSSEGSS). At Y1242 the chain carries Phosphotyrosine; by INSR. The interval 1251-1275 (QGSLAQSQPQPGDKNSWSRTRSLGG) is disordered. The span at 1253-1271 (SLAQSQPQPGDKNSWSRTR) shows a compositional bias: polar residues. Residue Y1303 is modified to Phosphotyrosine; by INSR. Residue K1314 forms a Glycyl lysine isopeptide (Lys-Gly) (interchain with G-Cter in ubiquitin) linkage.

As to quaternary structure, interacts with PHIP. Interacts with SH2B1; this interaction enhances leptin-induced activation of the PI3-kinase pathway. Interacts with GRB2. Interacts with PIK3R1. Interacts with DVL2; this interaction promotes the Wnt/beta-catenin signaling pathway. Phosphorylation fluctuates in a cell-cycle dependent manner with hyperphosphorylation during mitosis. Phosphorylated at Ser-556 and Ser-1098 by PLK1; these phosphorylations prevent the activation of the PI3K pathway upon growth factor stimulation by inhibiting the binding between IRS2 and the PI3K pathway components and increasing the level of IRS2 protein degradation. In addition, they prevent premature mitotic exit. In terms of processing, monoubiquitinated by NEDD4; leading to enhanced IGF1 signaling. During cell cycle, ubiquitination and proteasomal degradation are controlled by FZR1. In terms of tissue distribution, skeletal muscle, lung, brain, liver, kidney, heart and spleen.

It is found in the cytoplasm. The protein localises to the cytosol. In terms of biological role, signaling adapter protein that participates in the signal transduction from two prominent receptor tyrosine kinases, insulin receptor/INSR and insulin-like growth factor I receptor/IGF1R. Plays therefore an important role in development, growth, glucose homeostasis as well as lipid metabolism. Upon phosphorylation by the insulin receptor, functions as a signaling scaffold that propagates insulin action through binding to SH2 domain-containing proteins including the p85 regulatory subunit of PI3K, NCK1, NCK2, GRB2 or SHP2. Recruitment of GRB2 leads to the activation of the guanine nucleotide exchange factor SOS1 which in turn triggers the Ras/Raf/MEK/MAPK signaling cascade. Activation of the PI3K/AKT pathway is responsible for most of insulin metabolic effects in the cell, and the Ras/Raf/MEK/MAPK is involved in the regulation of gene expression and in cooperation with the PI3K pathway regulates cell growth and differentiation. Acts a positive regulator of the Wnt/beta-catenin signaling pathway through suppression of DVL2 autophagy-mediated degradation leading to cell proliferation. Plays a role in cell cycle progression by promoting a robust spindle assembly checkpoint (SAC) during M-phase. In macrophages, IL4-induced tyrosine phosphorylation of IRS2 leads to the recruitment and activation of phosphoinositide 3-kinase (PI3K). The sequence is that of Insulin receptor substrate 2 (Irs2) from Mus musculus (Mouse).